We begin with the raw amino-acid sequence, 428 residues long: UPF0597 protein BF3772 (428 aa).

Belongs to the UPF0597 family.

In Bacteroides fragilis (strain YCH46), this protein is UPF0597 protein BF3772.